The following is a 213-amino-acid chain: MSQLTIALTKGRILLETLPLLEAAGIAPLEDISKSRKLTFETTSPDVRLLILRGSDVPTYVEFGAADVGVSGKDTILEHGSTGFYEPLDLRIAKCRLMTAGIAGETLKPGRIRVATKYTNLAKQYYAEQGRQVDLIKLYGAMELAPILSLADEIVDIVDTGNTLKANGLEARDHIADISSRLIVNKASMKMKHQQIEALIDAISSAVNERAAA.

The protein belongs to the ATP phosphoribosyltransferase family. Short subfamily. In terms of assembly, heteromultimer composed of HisG and HisZ subunits.

The protein localises to the cytoplasm. It carries out the reaction 1-(5-phospho-beta-D-ribosyl)-ATP + diphosphate = 5-phospho-alpha-D-ribose 1-diphosphate + ATP. It participates in amino-acid biosynthesis; L-histidine biosynthesis; L-histidine from 5-phospho-alpha-D-ribose 1-diphosphate: step 1/9. In terms of biological role, catalyzes the condensation of ATP and 5-phosphoribose 1-diphosphate to form N'-(5'-phosphoribosyl)-ATP (PR-ATP). Has a crucial role in the pathway because the rate of histidine biosynthesis seems to be controlled primarily by regulation of HisG enzymatic activity. This chain is ATP phosphoribosyltransferase, found in Saccharophagus degradans (strain 2-40 / ATCC 43961 / DSM 17024).